The primary structure comprises 346 residues: Small ribosomal subunit biogenesis GTPase RsgA (346 aa).

Residues 1 to 25 (MAKRKLTQNQTRRIQSNNAKTLHRH) are disordered. Positions 7 to 20 (TQNQTRRIQSNNAK) are enriched in polar residues. Residues 103–271 (ENEISRPDYY…LIDSPGIREF (169 aa)) enclose the CP-type G domain. Residues 159–162 (NKVD) and 213–221 (GQSGVGKSS) each bind GTP. Cys295, Cys300, His302, and Cys308 together coordinate Zn(2+).

This sequence belongs to the TRAFAC class YlqF/YawG GTPase family. RsgA subfamily. In terms of assembly, monomer. Associates with 30S ribosomal subunit, binds 16S rRNA. Zn(2+) is required as a cofactor.

It is found in the cytoplasm. One of several proteins that assist in the late maturation steps of the functional core of the 30S ribosomal subunit. Helps release RbfA from mature subunits. May play a role in the assembly of ribosomal proteins into the subunit. Circularly permuted GTPase that catalyzes slow GTP hydrolysis, GTPase activity is stimulated by the 30S ribosomal subunit. In Haemophilus influenzae (strain ATCC 51907 / DSM 11121 / KW20 / Rd), this protein is Small ribosomal subunit biogenesis GTPase RsgA.